A 170-amino-acid chain; its full sequence is Helix-loop-helix protein 3 (170 aa).

Low complexity predominate over residues 1 to 26; that stretch reads MTASTSSTPSTSTKIPSSSKSSVTKQ. Disordered stretches follow at residues 1 to 42 and 118 to 170; these read MTAS…VDQV and TPSP…TETY. Residues 26–39 form a basic motif; degenerate region; sequence QTKQKRNERERKRV. In terms of domain architecture, bHLH spans 26–79; the sequence is QTKQKRNERERKRVDQVNQGFVLLQERVPKAAGNKAKLSKVETLREAARYIQEL. Residues 30–40 are compositionally biased toward basic and acidic residues; the sequence is KRNERERKRVD. A helix-loop-helix motif region spans residues 40-79; the sequence is DQVNQGFVLLQERVPKAAGNKAKLSKVETLREAARYIQEL. The segment covering 143–157 has biased composition (low complexity); the sequence is SHYYQESSSSSASTS.

As to quaternary structure, efficient DNA binding requires dimerization with another bHLH protein. Forms a heterodimer with hlh-2. As to expression, expressed in the ADL sensory neurons.

Its subcellular location is the nucleus. Probable transcriptional regulator. May mediate transcriptional activation by binding to the E-box motif 5'-CANNTG-3'. Plays a role in the differentiation of the hermaphrodite-specific motor neurons (HSN) that are required for normal egg laying. Might play a role in serotonin production by regulating expression of the tryptophan hydrolase tph-1 which catalyzes serotonin synthesis, in the HSN neurons. Also plays a role in HSN axon guidance towards the vulva and the ventral nerve cord, possibly by promoting the expression of the netrin receptor unc-40. Under feeding conditions, involved in the regulation of the srh-234 chemoreceptor encoding gene expression in the ADL sensory neurons. Together with hlh-2, involved in the induction of programmed cell death in the sister cells of the serotonergic neurosecretory motor (NSM) neurons, probably through the activation of egl-1 transcription. The polypeptide is Helix-loop-helix protein 3 (Caenorhabditis elegans).